The following is a 385-amino-acid chain: Chaperone protein DnaJ (385 aa).

Residues 5–70 enclose the J domain; the sequence is DYYEVLGVSK…DKKAAYDRFG (66 aa). The segment at 143–221 adopts a CR-type zinc-finger fold; that stretch reads GLSKQITVPS…CGGAGRQEKD (79 aa). Cys-156, Cys-159, Cys-173, Cys-176, Cys-195, Cys-198, Cys-209, and Cys-212 together coordinate Zn(2+). CXXCXGXG motif repeat units lie at residues 156–163, 173–180, 195–202, and 209–216; these read CSSCDGTG, CPTCSGMG, CPTCNGMG, and CRTCGGAG. Residues 299 to 323 form a disordered region; it reads GGRSRVRVPEGSQSGRQMRLRGKGM.

It belongs to the DnaJ family. Homodimer. It depends on Zn(2+) as a cofactor.

The protein resides in the cytoplasm. Its function is as follows. Participates actively in the response to hyperosmotic and heat shock by preventing the aggregation of stress-denatured proteins and by disaggregating proteins, also in an autonomous, DnaK-independent fashion. Unfolded proteins bind initially to DnaJ; upon interaction with the DnaJ-bound protein, DnaK hydrolyzes its bound ATP, resulting in the formation of a stable complex. GrpE releases ADP from DnaK; ATP binding to DnaK triggers the release of the substrate protein, thus completing the reaction cycle. Several rounds of ATP-dependent interactions between DnaJ, DnaK and GrpE are required for fully efficient folding. Also involved, together with DnaK and GrpE, in the DNA replication of plasmids through activation of initiation proteins. In Jannaschia sp. (strain CCS1), this protein is Chaperone protein DnaJ.